The sequence spans 428 residues: Serine--tRNA ligase (428 aa).

L-serine is bound at residue 231 to 233 (TAE). 262-264 (RSE) is an ATP binding site. L-serine is bound at residue glutamate 285. Position 349-352 (349-352 (EISS)) interacts with ATP. Residue serine 385 coordinates L-serine.

This sequence belongs to the class-II aminoacyl-tRNA synthetase family. Type-1 seryl-tRNA synthetase subfamily. In terms of assembly, homodimer. The tRNA molecule binds across the dimer.

Its subcellular location is the cytoplasm. It catalyses the reaction tRNA(Ser) + L-serine + ATP = L-seryl-tRNA(Ser) + AMP + diphosphate + H(+). The catalysed reaction is tRNA(Sec) + L-serine + ATP = L-seryl-tRNA(Sec) + AMP + diphosphate + H(+). Its pathway is aminoacyl-tRNA biosynthesis; selenocysteinyl-tRNA(Sec) biosynthesis; L-seryl-tRNA(Sec) from L-serine and tRNA(Sec): step 1/1. Its function is as follows. Catalyzes the attachment of serine to tRNA(Ser). Is also able to aminoacylate tRNA(Sec) with serine, to form the misacylated tRNA L-seryl-tRNA(Sec), which will be further converted into selenocysteinyl-tRNA(Sec). This chain is Serine--tRNA ligase, found in Staphylococcus aureus (strain MW2).